A 342-amino-acid polypeptide reads, in one-letter code: Lumican (342 aa).

Positions 1 to 18 (MNLGVFPLLLALIGGASS) are cleaved as a signal peptide. Tyr-20, Tyr-23, and Tyr-34 each carry sulfotyrosine. In terms of domain architecture, LRRNT spans 32–70 (ALYGRSSPNCAPECNCPESYPSAMYCDELKLKSVPMVPP). LRR repeat units lie at residues 71 to 92 (GIKY…AFEN), 95 to 118 (DLQW…VFSK), 121 to 141 (QLKK…PLPK), 142 to 163 (SLVD…DGLV), 164 to 185 (NLTF…AALK), 189 to 209 (SLEY…GLPV), 210 to 231 (SLLT…YFKR), and 234 to 254 (ALQY…PGNS). Residue Asn-92 is glycosylated (N-linked (GlcNAc...) (keratan sulfate) asparagine). Asn-131 is a glycosylation site (N-linked (GlcNAc...) (keratan sulfate) asparagine). N-linked (GlcNAc...) (keratan sulfate) asparagine glycosylation is present at Asn-164. Residue Asn-256 is glycosylated (N-linked (GlcNAc...) (keratan sulfate) asparagine). LRR repeat units follow at residues 259 to 280 (SLLE…NENL) and 281 to 300 (ENYY…SFCK). Cys-299 and Cys-332 are oxidised to a cystine. Ser-308 carries the phosphoserine modification. The stretch at 309–330 (KIKHLRLDGNHITQTSLPPDMY) is one LRR 11 repeat.

The protein belongs to the small leucine-rich proteoglycan (SLRP) family. SLRP class II subfamily. Binds to laminin. In terms of processing, sulfated on tyrosine residue(s). Post-translationally, contains keratan sulfate. In terms of tissue distribution, cornea and other tissues.

The protein localises to the secreted. It localises to the extracellular space. It is found in the extracellular matrix. This is Lumican (LUM) from Bos taurus (Bovine).